The primary structure comprises 1222 residues: BOS complex subunit NOMO1 (1222 aa).

An N-terminal signal peptide occupies residues 1–31 (MLVGQGAGPLGPAVVTAAVVLLLSGVGPAHG). Residues 32–1155 (SEDIVVGCGG…NPTRKLPEQD (1124 aa)) are Extracellular-facing. 3 N-linked (GlcNAc...) asparagine glycosylation sites follow: Asn-50, Asn-218, and Asn-618. A helical membrane pass occupies residues 1156 to 1176 (IAQGSYIALPLTLLVLLAGYN). Over 1177 to 1222 (HDKLIPLLLQLTSRLQGVRALGQAASDNSGPEDAKRQAKKQKTRRT) the chain is Cytoplasmic. The interval 1198 to 1222 (GQAASDNSGPEDAKRQAKKQKTRRT) is disordered. A Phosphoserine modification is found at Ser-1205. The segment covering 1213–1222 (QAKKQKTRRT) has biased composition (basic residues).

As to quaternary structure, component of the back of Sec61 (BOS) complex, composed of NCLN/Nicalin, NOMO (NOMO1, NOMO2 or NOMO3) and TMEM147. The BOS complex is part of the multi-pass translocon (MPT) complex, composed of three subcomplexes, the GEL complex (composed of RAB5IF/OPTI and TMCO1), the BOS complex (composed of NCLN/Nicalin, NOMO and TMEM147) and the PAT complex (composed of WDR83OS/Asterix and CCDC47). The MPT complex associates with the SEC61 complex. Due to the strong similarity between NOMO1, NOMO2 and NOMO3, similar interaction pattern probably occur for the three gene copies. As to expression, expressed in colon tumor tissue and in adjacent normal colonic mucosa.

Its subcellular location is the endoplasmic reticulum membrane. Its function is as follows. Component of the multi-pass translocon (MPT) complex that mediates insertion of multi-pass membrane proteins into the lipid bilayer of membranes. The MPT complex takes over after the SEC61 complex: following membrane insertion of the first few transmembrane segments of proteins by the SEC61 complex, the MPT complex occludes the lateral gate of the SEC61 complex to promote insertion of subsequent transmembrane regions. The protein is BOS complex subunit NOMO1 (NOMO1) of Homo sapiens (Human).